The primary structure comprises 146 residues: MNIIAQLEAEQCAKIEEKRQFPAFKPGDTVRVMVRVTEGTRTRVQAYEGVCIARSGGGLNETFTVRKISYGEGVERVFPVYSPLIEAVELVRRGKVRRAKLYYLRGLRGKAARIAEKRDYRKKGEKGVEKVETTPVSADIETQVAE.

The segment at 119-146 (DYRKKGEKGVEKVETTPVSADIETQVAE) is disordered.

Belongs to the bacterial ribosomal protein bL19 family.

In terms of biological role, this protein is located at the 30S-50S ribosomal subunit interface and may play a role in the structure and function of the aminoacyl-tRNA binding site. The polypeptide is Large ribosomal subunit protein bL19 (Bartonella tribocorum (strain CIP 105476 / IBS 506)).